Reading from the N-terminus, the 784-residue chain is PWWP domain-containing protein 2A (784 aa).

The segment covering 1 to 10 (MAAVAAAPGP) has biased composition (low complexity). Disordered stretches follow at residues 1–29 (MAAV…EWRL), 399–443 (DHKV…KTQL), 468–570 (EKAQ…EIQD), and 609–655 (SSAS…SKEE). The span at 399–412 (DHKVNGKGQHESQK) shows a compositional bias: basic and acidic residues. Over residues 433–442 (PSQTSAAKTQ) the composition is skewed to polar residues. Residues 684–744 (VGDIVWAKIY…LSQLAPFLEN (61 aa)) form the PWWP domain.

It is found in the nucleus. In terms of biological role, H2A.Z-specific chromatin binding protein which plays an important role in the neural crest cell differentiation and/or migration during early development and is essential for the development of the head and eye. Acts as an adapter between distinct nucleosome components (H3K36me3 or H2A.Z) and chromatin-modifying complexes, contributing to the regulation of the levels of histone acetylation at actively transcribed genes. The polypeptide is PWWP domain-containing protein 2A (pwwp2a) (Xenopus laevis (African clawed frog)).